The following is a 298-amino-acid chain: Lipoyl synthase (298 aa).

The [4Fe-4S] cluster site is built by Cys40, Cys45, Cys51, Cys67, Cys71, Cys74, and Ser280. The Radical SAM core domain maps to Ala53 to Ser269.

Belongs to the radical SAM superfamily. Lipoyl synthase family. [4Fe-4S] cluster serves as cofactor.

Its subcellular location is the cytoplasm. The enzyme catalyses [[Fe-S] cluster scaffold protein carrying a second [4Fe-4S](2+) cluster] + N(6)-octanoyl-L-lysyl-[protein] + 2 oxidized [2Fe-2S]-[ferredoxin] + 2 S-adenosyl-L-methionine + 4 H(+) = [[Fe-S] cluster scaffold protein] + N(6)-[(R)-dihydrolipoyl]-L-lysyl-[protein] + 4 Fe(3+) + 2 hydrogen sulfide + 2 5'-deoxyadenosine + 2 L-methionine + 2 reduced [2Fe-2S]-[ferredoxin]. It functions in the pathway protein modification; protein lipoylation via endogenous pathway; protein N(6)-(lipoyl)lysine from octanoyl-[acyl-carrier-protein]. Functionally, catalyzes the radical-mediated insertion of two sulfur atoms into the C-6 and C-8 positions of the octanoyl moiety bound to the lipoyl domains of lipoate-dependent enzymes, thereby converting the octanoylated domains into lipoylated derivatives. The sequence is that of Lipoyl synthase from Bacillus anthracis (strain A0248).